The primary structure comprises 410 residues: Diguanylate cyclase DgcM (410 aa).

PAS domains are found at residues threonine 3–aspartate 70 and glycine 129–glycine 198. Residues glycine 199–histidine 251 enclose the PAC domain. One can recognise a GGDEF domain in the interval glutamine 283–alanine 410. Aspartate 291 serves as a coordination point for Mg(2+). The substrate site is built by asparagine 299, histidine 304, and aspartate 308. Glutamate 334 contributes to the Mg(2+) binding site. Catalysis depends on glutamate 334, which acts as the Proton acceptor.

As to quaternary structure, forms homodimers and homotetramers. Interacts with PdeR and MlrA. Mg(2+) serves as cofactor.

It catalyses the reaction 2 GTP = 3',3'-c-di-GMP + 2 diphosphate. It participates in purine metabolism; 3',5'-cyclic di-GMP biosynthesis. Activity is inhibited by the phosphodiesterase PdeR. Inhibition is relieved by high cellular c-di-GMP levels. Part of a signaling cascade that regulates curli biosynthesis. The cascade is composed of two cyclic-di-GMP (c-di-GMP) control modules, in which c-di-GMP controlled by the DgcE/PdeH pair (module I) regulates the activity of the DgcM/PdeR pair (module II), which in turn regulates activity of the transcription factor MlrA and expression of the master biofilm regulator csgD. DgcM stimulates activity of MlrA by direct interaction, leading to the transcription of csgD. It also catalyzes the synthesis of c-di-GMP via the condensation of 2 GTP molecules, which contributes to the c-di-GMP pool generated by module I in a positive feedback loop. Production of c-di-GMP contributes to but is not essential for MlrA activation. This is Diguanylate cyclase DgcM from Escherichia coli (strain K12).